A 694-amino-acid chain; its full sequence is Elongation factor G (694 aa).

Residues 8–284 (EKLRNIGIVA…AVIDFLPSPV (277 aa)) enclose the tr-type G domain. GTP-binding positions include 17–24 (AHIDAGKT), 81–85 (DTPGH), and 135–138 (NKMD).

It belongs to the TRAFAC class translation factor GTPase superfamily. Classic translation factor GTPase family. EF-G/EF-2 subfamily.

The protein resides in the cytoplasm. Functionally, catalyzes the GTP-dependent ribosomal translocation step during translation elongation. During this step, the ribosome changes from the pre-translocational (PRE) to the post-translocational (POST) state as the newly formed A-site-bound peptidyl-tRNA and P-site-bound deacylated tRNA move to the P and E sites, respectively. Catalyzes the coordinated movement of the two tRNA molecules, the mRNA and conformational changes in the ribosome. The chain is Elongation factor G from Persephonella marina (strain DSM 14350 / EX-H1).